Here is a 424-residue protein sequence, read N- to C-terminus: Tyrosine--tRNA ligase (424 aa).

Position 37 (Y37) interacts with L-tyrosine. Residues 42-51 (PTADSLHLGH) carry the 'HIGH' region motif. Position 144 is an N6-acetyllysine (K144). L-tyrosine contacts are provided by Y175 and Q179. Residues 235 to 239 (KFGKT) carry the 'KMSKS' region motif. K238 contacts ATP. In terms of domain architecture, S4 RNA-binding spans 357 to 414 (ADLMQALVDSELQPSRGQARKTIASNAITINGEKQSDPEYFFKEEDRLFGRFTLLRRG).

The protein belongs to the class-I aminoacyl-tRNA synthetase family. TyrS type 1 subfamily. Homodimer.

Its subcellular location is the cytoplasm. The enzyme catalyses tRNA(Tyr) + L-tyrosine + ATP = L-tyrosyl-tRNA(Tyr) + AMP + diphosphate + H(+). In terms of biological role, catalyzes the attachment of tyrosine to tRNA(Tyr) in a two-step reaction: tyrosine is first activated by ATP to form Tyr-AMP and then transferred to the acceptor end of tRNA(Tyr). In Shigella flexneri serotype 5b (strain 8401), this protein is Tyrosine--tRNA ligase.